The primary structure comprises 200 residues: Recombination protein RecR (200 aa).

A C4-type zinc finger spans residues 60–75; sequence CVYCQALTEDDVCNIC. The 95-residue stretch at 83–177 folds into the Toprim domain; it reads TKLCIIESML…KISRIGFGVP (95 aa).

This sequence belongs to the RecR family.

May play a role in DNA repair. It seems to be involved in an RecBC-independent recombinational process of DNA repair. It may act with RecF and RecO. This chain is Recombination protein RecR, found in Francisella tularensis subsp. tularensis (strain SCHU S4 / Schu 4).